The primary structure comprises 341 residues: Glyceraldehyde-3-phosphate dehydrogenase 2 (341 aa).

Residues 12–13, Arg-78, and Thr-120 contribute to the NAD(+) site; that span reads RI. D-glyceraldehyde 3-phosphate is bound by residues 152–154 and Thr-183; that span reads SCT. Cys-153 serves as the catalytic Nucleophile. Residue Asn-184 coordinates NAD(+). D-glyceraldehyde 3-phosphate is bound by residues Arg-198, 211–212, and Arg-234; that span reads TG. Asn-313 contributes to the NAD(+) binding site.

It belongs to the glyceraldehyde-3-phosphate dehydrogenase family. Homotetramer.

Its subcellular location is the cytoplasm. The enzyme catalyses D-glyceraldehyde 3-phosphate + phosphate + NAD(+) = (2R)-3-phospho-glyceroyl phosphate + NADH + H(+). It participates in carbohydrate degradation; glycolysis; pyruvate from D-glyceraldehyde 3-phosphate: step 1/5. Functionally, catalyzes the oxidative phosphorylation of glyceraldehyde 3-phosphate (G3P) to 1,3-bisphosphoglycerate (BPG) using the cofactor NAD. The first reaction step involves the formation of a hemiacetal intermediate between G3P and a cysteine residue, and this hemiacetal intermediate is then oxidized to a thioester, with concomitant reduction of NAD to NADH. The reduced NADH is then exchanged with the second NAD, and the thioester is attacked by a nucleophilic inorganic phosphate to produce BPG. The protein is Glyceraldehyde-3-phosphate dehydrogenase 2 (gapA2) of Staphylococcus epidermidis (strain ATCC 12228 / FDA PCI 1200).